The primary structure comprises 98 residues: Beta-2-microglobulin (98 aa).

The Ig-like C1-type domain maps to 4-92 (PKVQVYSRFP…HETLKEPQVY (89 aa)). A disulfide bridge links Cys-24 with Cys-79.

The protein belongs to the beta-2-microglobulin family. As to quaternary structure, heterodimer of an alpha chain and a beta chain. Beta-2-microglobulin is the beta-chain of major histocompatibility complex class I molecules.

The protein resides in the secreted. Its function is as follows. Component of the class I major histocompatibility complex (MHC). Involved in the presentation of peptide antigens to the immune system. This Meleagris gallopavo (Wild turkey) protein is Beta-2-microglobulin (B2M).